A 512-amino-acid polypeptide reads, in one-letter code: Neuronal acetylcholine receptor subunit alpha-3 (512 aa).

An N-terminal signal peptide occupies residues 1–23 (MNSASRITLFFLLTVLITQECLS). Residues 24–242 (SKGEDRLFRR…PLFYTINLII (219 aa)) are Extracellular-facing. Residues N47 and N164 are each glycosylated (N-linked (GlcNAc...) asparagine). Disulfide bonds link C151/C165 and C215/C216. Residues 243 to 258 (PCLLISFLTILVFYLP) form a helical membrane-spanning segment. The Cytoplasmic segment spans residues 259 to 260 (SD). Residues 261–277 (CGEKVTLCISVLLSLTV) form a helical membrane-spanning segment. E263 provides a ligand contact to Na(+). Residues 278 to 299 (FLLVITETIPSTSLVIPLIGEY) are Extracellular-facing. Residues 300–318 (LLFTMIFVTLSIVITVFVL) form a helical membrane-spanning segment. The Cytoplasmic portion of the chain corresponds to 319–482 (NVHYRTPMTH…EDDWKYVAMV (164 aa)). The tract at residues 356-389 (ESSGKGGGEIAGSSGTGGGRGAEGKKMKSSASQQ) is disordered. Gly residues predominate over residues 359-376 (GKGGGEIAGSSGTGGGRG). A helical transmembrane segment spans residues 483–501 (IDRIFLWVFVLVCVLGTLG). Residues 502 to 512 (LFLQPLIGFFS) lie on the Extracellular side of the membrane.

This sequence belongs to the ligand-gated ion channel (TC 1.A.9) family. Acetylcholine receptor (TC 1.A.9.1) subfamily. Alpha-3/CHRNA3 sub-subfamily. Neuronal AChR is composed of two different types of subunits: alpha and beta. CHRNA3/Alpha-3 subunit can be combined to CHRNB2/beta-2 or CHRNB4/beta-4 to give rise to functional receptors. Expressed in retina and brain.

The protein resides in the synaptic cell membrane. It localises to the cell membrane. The protein localises to the endoplasmic reticulum. It is found in the golgi apparatus. The catalysed reaction is K(+)(in) = K(+)(out). It carries out the reaction Na(+)(in) = Na(+)(out). It catalyses the reaction Ca(2+)(in) = Ca(2+)(out). Activated by a myriad of ligands such as acetylcholine, cytisine, nicotine, choline and epibatidine. The heteropentamer CHRNA3:CHRNB2 activity is blocked by alpha-conotoxins ImI, ImII, PnIA, GID and MII. The heteropentamer CHRNA3:CHRNB4 activity is blocked by the alpha-conotoxin ImI and AuIB. Component of neuronal acetylcholine receptors (nAChRs) that function as pentameric, ligand-gated cation channels with high calcium permeability among other activities. nAChRs are excitatory neurotrasnmitter receptors formed by a collection of nAChR subunits known to mediate synaptic transmission in the nervous system and the neuromuscular junction. Each nAchR subunit confers differential attributes to channel properties, including activation, deactivation and desensitization kinetics, pH sensitivity, cation permeability, and binding to allosteric modulators. CHRNA3 forms heteropentameric neuronal acetylcholine receptors with CHRNB2 and CHRNB4. CHRNA3:CHRNB4 being predominant in neurons of the autonomic ganglia, it is known as ganglionic nicotinic receptor. CHRNA3:CHRNB4 also plays an important role in the habenulo-interpeduncular tract, modulating the mesolimbic dopamine system and affecting reward circuits and addiction. Hypothalamic CHRNA3:CHRNB4 nAChR activation by nicotine leads to activation of POMC neurons and a decrease in food intake. Also expressed in the urothelium where it modulates reflex bladder activity by increasing intracellular calcium through extracellular influx and basal ATP release. The protein is Neuronal acetylcholine receptor subunit alpha-3 (chrna3) of Carassius auratus (Goldfish).